A 243-amino-acid chain; its full sequence is Probable transcriptional regulatory protein Tbd_2215 (243 aa).

Belongs to the TACO1 family.

Its subcellular location is the cytoplasm. This is Probable transcriptional regulatory protein Tbd_2215 from Thiobacillus denitrificans (strain ATCC 25259 / T1).